A 424-amino-acid polypeptide reads, in one-letter code: Serine--tRNA ligase (424 aa).

230-232 (TAE) contacts L-serine. 261 to 263 (RSE) is an ATP binding site. Glu-284 is a binding site for L-serine. Residue 348–351 (EISS) coordinates ATP. Residue Ser-384 coordinates L-serine.

This sequence belongs to the class-II aminoacyl-tRNA synthetase family. Type-1 seryl-tRNA synthetase subfamily. Homodimer. The tRNA molecule binds across the dimer.

The protein resides in the cytoplasm. It carries out the reaction tRNA(Ser) + L-serine + ATP = L-seryl-tRNA(Ser) + AMP + diphosphate + H(+). The enzyme catalyses tRNA(Sec) + L-serine + ATP = L-seryl-tRNA(Sec) + AMP + diphosphate + H(+). It functions in the pathway aminoacyl-tRNA biosynthesis; selenocysteinyl-tRNA(Sec) biosynthesis; L-seryl-tRNA(Sec) from L-serine and tRNA(Sec): step 1/1. In terms of biological role, catalyzes the attachment of serine to tRNA(Ser). Is also able to aminoacylate tRNA(Sec) with serine, to form the misacylated tRNA L-seryl-tRNA(Sec), which will be further converted into selenocysteinyl-tRNA(Sec). The protein is Serine--tRNA ligase of Desulfatibacillum aliphaticivorans.